The primary structure comprises 473 residues: Sulfhydrylase-like protein lolC1 (473 aa).

Position 226 is an N6-(pyridoxal phosphate)lysine (Lys226).

The protein belongs to the trans-sulfuration enzymes family. It depends on pyridoxal 5'-phosphate as a cofactor.

The protein operates within alkaloid biosynthesis. In terms of biological role, sulfhydrylase-like protein; part of the gene cluster that mediates the biosynthesis of loline alkaloids, potent insecticidal agents composed of a pyrrolizidine ring system and an uncommon ether bridge linking carbons 2 and 7. Lolines are structurally differentiated by the various modifications of the L-amino group and include norloline, loline, N-methylloline, N-acetylloline, N-acetylnorloline, and N-formylloline. The first committed step is the condensation of O-acetyl-L-homoserine (derived from L-aspartic acid) and L-proline, probably catalyzed by the gamma-type pyridoxal 5'-phosphate(PLP)-dependent enzyme lolC, to give the diamino diacid, NACPP. Ensuing cyclization, decarboxylation, and acetylation steps yield 1-exo-acetamidopyrrolizidine (AcAP). LolO is required for installation of the ether bridge upon the pathway intermediate, 1-exo-acetamidopyrrolizidine (AcAP). In sequential 2-oxoglutarate- and O(2)-consuming steps, lolO removes hydrogens from C2 and C7 of AcAP to form both carbon-oxygen bonds in N-acetylnorloline (NANL), the precursor to all other lolines. The enzymes lolD, lolE, lolF and lolT have also been proposed to be involved in the ether-bridge installation. Further processing of the exocyclic moiety of NANL by fungal N-acetamidase (LolN), methyltransferase (LolM), and cytochrome P450 (LolP) enzymes, with occasional involvement of a plant acetyltransferase, generates the other known lolines. LolN transforms NANL to norlonine which is monomethylated and dimethylated to respectively lonine and N-methyllonine (NML) by lolM. LolP catalyzes hydroxylation of the methyl group in N-methylloline (NML) and further oxygenation to N-formylloline (NFL). A plant acetyltransferase is responsible for the acetylation of loline to form N-acetylloline (NAL). LolA might interact with aspartate kinase to prevent feedback inhibition of its activity by these end products and thereby promote production of L-homoserine from L-aspartate. The sequence is that of Sulfhydrylase-like protein lolC1 from Epichloe uncinata (Endophyte fungus).